We begin with the raw amino-acid sequence, 360 residues long: DNA polymerase IV (360 aa).

In terms of domain architecture, UmuC spans 8 to 189; it reads IIHVDMDCFF…LPLEKIPGVG (182 aa). Mg(2+) contacts are provided by Asp-12 and Asp-107. The active site involves Glu-108.

This sequence belongs to the DNA polymerase type-Y family. Monomer. Requires Mg(2+) as cofactor.

The protein resides in the cytoplasm. It carries out the reaction DNA(n) + a 2'-deoxyribonucleoside 5'-triphosphate = DNA(n+1) + diphosphate. Poorly processive, error-prone DNA polymerase involved in untargeted mutagenesis. Copies undamaged DNA at stalled replication forks, which arise in vivo from mismatched or misaligned primer ends. These misaligned primers can be extended by PolIV. Exhibits no 3'-5' exonuclease (proofreading) activity. May be involved in translesional synthesis, in conjunction with the beta clamp from PolIII. This Vibrio cholerae serotype O1 (strain ATCC 39315 / El Tor Inaba N16961) protein is DNA polymerase IV.